The primary structure comprises 426 residues: Histidine--tRNA ligase (426 aa).

The protein belongs to the class-II aminoacyl-tRNA synthetase family. In terms of assembly, homodimer.

It localises to the cytoplasm. The enzyme catalyses tRNA(His) + L-histidine + ATP = L-histidyl-tRNA(His) + AMP + diphosphate + H(+). This is Histidine--tRNA ligase from Legionella pneumophila (strain Paris).